The chain runs to 448 residues: Signal recognition particle 54 kDa protein (448 aa).

Residues 107-114, 189-193, and 247-250 contribute to the GTP site; these read GIQGSGKT, DSAGR, and TKLD.

It belongs to the GTP-binding SRP family. SRP54 subfamily. In terms of assembly, part of the signal recognition particle protein translocation system, which is composed of SRP and FtsY. Archaeal SRP consists of a 7S RNA molecule of 300 nucleotides and two protein subunits: SRP54 and SRP19.

Its subcellular location is the cytoplasm. The catalysed reaction is GTP + H2O = GDP + phosphate + H(+). Functionally, involved in targeting and insertion of nascent membrane proteins into the cytoplasmic membrane. Binds to the hydrophobic signal sequence of the ribosome-nascent chain (RNC) as it emerges from the ribosomes. The SRP-RNC complex is then targeted to the cytoplasmic membrane where it interacts with the SRP receptor FtsY. In Thermococcus kodakarensis (strain ATCC BAA-918 / JCM 12380 / KOD1) (Pyrococcus kodakaraensis (strain KOD1)), this protein is Signal recognition particle 54 kDa protein.